A 171-amino-acid chain; its full sequence is Protein E6 (171 aa).

The disordered stretch occupies residues 1–28; sequence MATTDSSTDSADEGPSPKSSYCDTTETK. Residues 17-28 show a composition bias toward polar residues; the sequence is PKSSYCDTTETK. Zinc fingers lie at residues 58 to 94 and 131 to 167; these read CNFC…CRVC and CYTC…CRLC.

The protein belongs to the papillomaviridae E6 protein family. Forms homodimers. Interacts with ubiquitin-protein ligase UBE3A/E6-AP; this interaction stimulates UBE3A ubiquitin activity. Interacts with host BAK1.

It is found in the host cytoplasm. The protein localises to the host nucleus. Plays a major role in the induction and maintenance of cellular transformation. E6 associates with host UBE3A/E6-AP ubiquitin-protein ligase and modulates its activity. Protects host keratinocytes from apoptosis by mediating the degradation of host BAK1. May also inhibit host immune response. This is Protein E6 from Human papillomavirus 14.